We begin with the raw amino-acid sequence, 699 residues long: Elongation factor G (699 aa).

The tr-type G domain occupies 8-283 (EHIRNIGICA…AVVDFLPSPI (276 aa)). GTP is bound by residues 17-24 (AHIDAGKT), 81-85 (DTPGH), and 135-138 (NKMD).

The protein belongs to the TRAFAC class translation factor GTPase superfamily. Classic translation factor GTPase family. EF-G/EF-2 subfamily.

The protein localises to the cytoplasm. Its function is as follows. Catalyzes the GTP-dependent ribosomal translocation step during translation elongation. During this step, the ribosome changes from the pre-translocational (PRE) to the post-translocational (POST) state as the newly formed A-site-bound peptidyl-tRNA and P-site-bound deacylated tRNA move to the P and E sites, respectively. Catalyzes the coordinated movement of the two tRNA molecules, the mRNA and conformational changes in the ribosome. This is Elongation factor G from Rickettsia rickettsii.